A 637-amino-acid chain; its full sequence is Palmitoyltransferase Hip14 (637 aa).

Topologically, residues 1 to 295 are cytoplasmic; it reads MYQSACQAAT…SKLRHDKRLR (295 aa). 5 ANK repeats span residues 77–106, 111–140, 144–173, 177–207, and 212–242; these read ETVTLLHWAAINNRRDIIRYFLEKGATVDA, LNATPLHWATRQGHLGAVVLLMAAGADPRI, EGCSCIHIAAQFAHTALVAYFIAKGVDPDL, GGMTALMWAAWKVCALDPVRLLLTLGANPAM, and HGNTALHWAILARNATAISTLVLKSKASLDV. Residues 296-315 traverse the membrane as a helical segment; sequence WWSMVACPFTAFYLAGIVFT. Residues 316 to 318 lie on the Lumenal side of the membrane; sequence VNT. A helical transmembrane segment spans residues 319–341; it reads LYIIKFFLLGCLYSIFHTIGKAL. Topologically, residues 342–345 are cytoplasmic; that stretch reads FDEH. A helical transmembrane segment spans residues 346–366; sequence LMALLPLSVYLATKAWFYVTW. Topologically, residues 367–373 are lumenal; it reads LMYIDDA. Residues 374-394 form a helical membrane-spanning segment; that stretch reads VSFTATVCFLISSLLLWVCFL. Over 395–472 the chain is Cytoplasmic; sequence KSWKGDPGII…VGNCIGLKNH (78 aa). The DHHC domain occupies 430–480; the sequence is SFCSGCLVRRPIRSKHCSVCDRCVARFDHHCPWVGNCIGLKNHSYFMGFLW. The active-site S-palmitoyl cysteine intermediate is the cysteine 460. A helical transmembrane segment spans residues 473–493; it reads SYFMGFLWMLLIMCAWMLYGG. Topologically, residues 494–520 are lumenal; that stretch reads SKYYVNQCNVRFDDFLGAMRAIGNCDA. Residues 521 to 541 traverse the membrane as a helical segment; sequence WVGWVMGNALLHMSWVILLTI. At 542 to 637 the chain is on the cytoplasmic side; it reads CQTYQVICLG…DGMAGDHQYV (96 aa).

The protein belongs to the DHHC palmitoyltransferase family. AKR/ZDHHC17 subfamily. Interacts with dorsal-ventral patterning protein Sog. In terms of tissue distribution, in stage 13-15 embryos, expressed in the central nervous system. At the third instar larval stage, expressed in the ventral nerve cord and is enriched in the neuropil.

The protein resides in the golgi apparatus membrane. It is found in the presynaptic cell membrane. It catalyses the reaction L-cysteinyl-[protein] + hexadecanoyl-CoA = S-hexadecanoyl-L-cysteinyl-[protein] + CoA. In terms of biological role, probable palmitoyltransferase which is required for photoreceptor synaptic transmission and for the correct expression and localization of palmitoylated protein Csp and synaptosomal-associated protein Snap25. Probably palmitoylates Csp. Probably also palmitoylates the dorsal-ventral patterning protein Sog and promotes its secretion and activity and the stabilization of the membrane-bound form. Required for synaptic vesicle exocytosis. In Drosophila melanogaster (Fruit fly), this protein is Palmitoyltransferase Hip14.